The following is a 163-amino-acid chain: Epithelial membrane protein 3 (163 aa).

Residues 4–24 form a helical membrane-spanning segment; it reads LLLVVSALHILILILLFVATL. Asparagine 49 and asparagine 56 each carry an N-linked (GlcNAc...) asparagine glycan. 3 helical membrane-spanning segments follow: residues 66 to 86, 100 to 120, and 139 to 159; these read VQVL…LFMF, TGFC…IYAI, and FALA…YIHL.

Belongs to the PMP-22/EMP/MP20 family.

Its subcellular location is the membrane. In terms of biological role, probably involved in cell proliferation and cell-cell interactions. The sequence is that of Epithelial membrane protein 3 (EMP3) from Bos taurus (Bovine).